A 147-amino-acid polypeptide reads, in one-letter code: Interleukin-4 (147 aa).

Positions 1 to 24 are cleaved as a signal peptide; the sequence is MGLPAQLPVTLLCLLAGTAHFIQG. A disulfide bridge connects residues Cys48 and Cys88. N-linked (GlcNAc...) asparagine glycosylation is present at Asn62.

Belongs to the IL-4/IL-13 family.

It is found in the secreted. Its function is as follows. Participates in at least several B-cell activation processes as well as of other cell types. It is a costimulator of DNA-synthesis. It induces the expression of class II MHC molecules on resting B-cells. It enhances both secretion and cell surface expression of IgE and IgG1. It also regulates the expression of the low affinity Fc receptor for IgE (CD23) on both lymphocytes and monocytes. Positively regulates IL31RA expression in macrophages. Stimulates autophagy in dendritic cells by interfering with mTORC1 signaling and through the induction of RUFY4. The sequence is that of Interleukin-4 (IL4) from Oryctolagus cuniculus (Rabbit).